The chain runs to 377 residues: MSKRDYYEVLGVSRDTSEREIKKAYKRLAMKFHPDRNPGDKTAEANFKEIKEAYEILTDADKKAAYDQFGHAGVDPNRGGGGYGGGQGDFGDIFGDVFGDIFGGGRRGGQRQAARGSDLRYNLELSLEEAVKGLTKELRIPTLATCDLCEGSGAKKGTSATTCGTCHGQGQVQMRQGFFAVQQPCPTCHGRGKIIKDPCTKCHGDGRVEKSKTLSVKIPAGVDTGDRIRLAGEGEAGEFGAPAGDLYVQVSVREHAIFVRDGNNLYCEVPISFSKAALGGEIEVPTLDGKVSLKIPAETQTGRMFRLRGKGVKSVRSHAVGDLLCKVVMETPVNLNDRQKELLREFEATLTGESKKHSPKAEGFFDGVKKFFQDLNS.

The J domain occupies 5–70; it reads DYYEVLGVSR…DKKAAYDQFG (66 aa). Residues 133–211 form a CR-type zinc finger; sequence GLTKELRIPT…CHGDGRVEKS (79 aa). Residues cysteine 146, cysteine 149, cysteine 163, cysteine 166, cysteine 185, cysteine 188, cysteine 199, and cysteine 202 each contribute to the Zn(2+) site. CXXCXGXG motif repeat units lie at residues 146–153, 163–170, 185–192, and 199–206; these read CDLCEGSG, CGTCHGQG, CPTCHGRG, and CTKCHGDG.

The protein belongs to the DnaJ family. In terms of assembly, homodimer. Requires Zn(2+) as cofactor.

The protein localises to the cytoplasm. Its function is as follows. Participates actively in the response to hyperosmotic and heat shock by preventing the aggregation of stress-denatured proteins and by disaggregating proteins, also in an autonomous, DnaK-independent fashion. Unfolded proteins bind initially to DnaJ; upon interaction with the DnaJ-bound protein, DnaK hydrolyzes its bound ATP, resulting in the formation of a stable complex. GrpE releases ADP from DnaK; ATP binding to DnaK triggers the release of the substrate protein, thus completing the reaction cycle. Several rounds of ATP-dependent interactions between DnaJ, DnaK and GrpE are required for fully efficient folding. Also involved, together with DnaK and GrpE, in the DNA replication of plasmids through activation of initiation proteins. This Shewanella baltica (strain OS223) protein is Chaperone protein DnaJ.